Here is a 203-residue protein sequence, read N- to C-terminus: Endo-type membrane-bound lytic murein transglycosylase A (203 aa).

A signal peptide spans 1–15 (MKLRWFAFLMVLLAG). Cys-16 carries the N-palmitoyl cysteine lipid modification. Cys-16 carries the S-diacylglycerol cysteine lipid modification.

The protein belongs to the transglycosylase Slt family.

Its subcellular location is the cell outer membrane. It catalyses the reaction Endolytic cleavage of the (1-&gt;4)-beta-glycosidic linkage between N-acetylmuramic acid (MurNAc) and N-acetylglucosamine (GlcNAc) residues in peptidoglycan with concomitant formation of a 1,6-anhydrobond in the MurNAc residue.. Murein-degrading enzyme. May play a role in recycling of muropeptides during cell elongation and/or cell division. Preferentially cleaves at a distance of more than two disaccharide units from the ends of the glycan chain. The protein is Endo-type membrane-bound lytic murein transglycosylase A of Enterobacter sp. (strain 638).